The following is a 911-amino-acid chain: Protein dead ringer (911 aa).

3 disordered regions span residues 1–44, 67–87, and 172–274; these read MQLR…DCDS, SGGGGSFASPEPQTELPLSHH, and HVTS…QNNG. Over residues 19 to 34 the composition is skewed to basic and acidic residues; it reads IERDSDLGDDLSHGDR. At S30 the chain carries Phosphoserine. At T35 the chain carries Phosphothreonine. Position 44 is a phosphoserine (S44). Low complexity predominate over residues 174–201; it reads TSSPSGGNGSSYNGGTTPTNSSNSNATT. Residues 202–231 show a composition bias toward gly residues; it reads NGGGTAGPGGTGGSGGGGGGGGGGGGGVGG. The segment covering 252–273 has biased composition (low complexity); it reads AANSASNSSTSSEASNSSQQNN. An ARID domain is found at 293–385; the sequence is DPKRKEFLDD…YLYPYECEKK (93 aa). 3 disordered regions span residues 501–633, 662–775, and 826–877; these read GMPP…VGSG, PSMG…GKLN, and QSET…DQDM. Over residues 512 to 550 the composition is skewed to low complexity; it reads HQQQHSQQQQQQQHHHQQQQQQQSQQQHHLQQQRQRSQS. Positions 570–600 are enriched in polar residues; sequence HNNNSPPGSAHTSPQQREALNLSDSPPNLTN. Residues S592 and S594 each carry the phosphoserine modification. Positions 601-621 are enriched in basic and acidic residues; sequence IKREREREPTPEPVDQDDKFV. Residue S720 is modified to Phosphoserine. The 95-residue stretch at 731-825 folds into the REKLES domain; it reads TTGGSVGHRH…GVLVANVPLS (95 aa). Positions 737 to 751 are enriched in basic residues; sequence GHRHSSPVSTKKKGG. Over residues 841–853 the composition is skewed to acidic residues; that stretch reads TVEEEKDEEEEEE. Positions 854-870 are enriched in basic and acidic residues; the sequence is PKAAEEESHRSPVKQEN.

Present in the pharyngeal muscles, hindgut epithelium, amnioserosa, ring gland, midgut-hindgut junction, posterior region of each brain lobe, longitudinal glial cells of the CNS and the salivary gland duct of germ-band retracted embryos.

The protein localises to the nucleus. In terms of biological role, transcription factor which is a downstream target of gcm and repo. Directly or indirectly activates the transcription of locos and pros, which are essential for the development of some glial cells. Plays an essential role in defining the cell shape and migration characteristics of longitudinal glia that enable them to establish a normal axon scaffold. The sequence is that of Protein dead ringer (retn) from Drosophila melanogaster (Fruit fly).